The primary structure comprises 552 residues: MMDSDDDMLDAHDMDSVDYDFDSGGTDDDNDIDETDYVFGEADTDDAAIIAYHRSQINYVVLKEEDIRRHQKDDVGRVSVVLSITDVQASLLLLHYHWSVSKVNDEWFADEDRVRRTVGILEGPAPDGREFTCGICFESYPLEETISVSCGHPFCATCWTGYISTSINDGPGCLMLKCPYPCCPAAIGRDMIDNLCSKEDKERYYRYFLRSYVEVNREMKCCPAPGCEHAISFAAGTESNYDVSCLCSHSFCWNCSEEAHRPVDCDTVGKWILKNSTESENMNWILANSKPCPKCKRPIEKNHGCMHMTCTPPCKFEFCWLCLNAWTEHGESSGGYYACNRYEAAKKQGLYDEAERRREMAKNSLEKYTHYYKRWASNQVSRQKAMGDLQKMQSEKLRKLSDIQCTSESQLKFIAEAWLQIIECRRVLKWTYAYGYYVPDDHTKKQFFEYLQGEAESGLERLHECIENDIEVFEFGEGPSEEFNHFRTKLTDLTSITKTFFQNLVKALENGLADVDSHAASSKPANCKPSSNTKDGGKGKKEALTMAGSAET.

Residues 129–343 form a TRIAD supradomain region; that stretch reads REFTCGICFE…GGYYACNRYE (215 aa). Positions 133, 136, 150, 152, 155, 158, 178, 183, 222, 227, 245, 247, 252, 255, 260, 265, 292, and 295 each coordinate Zn(2+). The segment at 133-183 adopts an RING-type 1 zinc-finger fold; the sequence is CGICFESYPLEETISVSCGHPFCATCWTGYISTSINDGPGCLMLKCPYPCC. The IBR-type zinc-finger motif lies at 202–265; the sequence is ERYYRYFLRS…SEEAHRPVDC (64 aa). Residues 292-322 form an RING-type 2; atypical zinc finger; the sequence is CPKCKRPIEKNHGCMHMTCTPPCKFEFCWLC. Residue C305 is part of the active site. The Zn(2+) site is built by C310, C314, C319, C322, H329, and C339. Residues 518 to 552 form a disordered region; that stretch reads HAASSKPANCKPSSNTKDGGKGKKEALTMAGSAET. Over residues 519–534 the composition is skewed to polar residues; the sequence is AASSKPANCKPSSNTK.

The protein belongs to the RBR family. Ariadne subfamily. The cofactor is Zn(2+).

It carries out the reaction [E2 ubiquitin-conjugating enzyme]-S-ubiquitinyl-L-cysteine + [acceptor protein]-L-lysine = [E2 ubiquitin-conjugating enzyme]-L-cysteine + [acceptor protein]-N(6)-ubiquitinyl-L-lysine.. Its pathway is protein modification; protein ubiquitination. In terms of biological role, might act as an E3 ubiquitin-protein ligase, or as part of E3 complex, which accepts ubiquitin from specific E2 ubiquitin-conjugating enzymes and then transfers it to substrates. The chain is Putative E3 ubiquitin-protein ligase ARI6 (ARI6) from Arabidopsis thaliana (Mouse-ear cress).